We begin with the raw amino-acid sequence, 254 residues long: Phosphoribosylaminoimidazole-succinocarboxamide synthase (254 aa).

It belongs to the SAICAR synthetase family.

The enzyme catalyses 5-amino-1-(5-phospho-D-ribosyl)imidazole-4-carboxylate + L-aspartate + ATP = (2S)-2-[5-amino-1-(5-phospho-beta-D-ribosyl)imidazole-4-carboxamido]succinate + ADP + phosphate + 2 H(+). It functions in the pathway purine metabolism; IMP biosynthesis via de novo pathway; 5-amino-1-(5-phospho-D-ribosyl)imidazole-4-carboxamide from 5-amino-1-(5-phospho-D-ribosyl)imidazole-4-carboxylate: step 1/2. This Bartonella quintana (strain Toulouse) (Rochalimaea quintana) protein is Phosphoribosylaminoimidazole-succinocarboxamide synthase.